The chain runs to 117 residues: Ribosome-binding factor A (117 aa).

The protein belongs to the RbfA family. In terms of assembly, monomer. Binds 30S ribosomal subunits, but not 50S ribosomal subunits or 70S ribosomes.

It localises to the cytoplasm. In terms of biological role, one of several proteins that assist in the late maturation steps of the functional core of the 30S ribosomal subunit. Associates with free 30S ribosomal subunits (but not with 30S subunits that are part of 70S ribosomes or polysomes). Required for efficient processing of 16S rRNA. May interact with the 5'-terminal helix region of 16S rRNA. The polypeptide is Ribosome-binding factor A (Nitrosomonas europaea (strain ATCC 19718 / CIP 103999 / KCTC 2705 / NBRC 14298)).